The primary structure comprises 197 residues: Recombination protein RecR (197 aa).

The segment at 57-72 (CSVCFAITEDDPCWIC) adopts a C4-type zinc-finger fold. A Toprim domain is found at 79-174 (GTICVVEEPQ…KVTRLAHGIP (96 aa)).

Belongs to the RecR family.

Functionally, may play a role in DNA repair. It seems to be involved in an RecBC-independent recombinational process of DNA repair. It may act with RecF and RecO. In Geobacter sp. (strain M21), this protein is Recombination protein RecR.